A 291-amino-acid polypeptide reads, in one-letter code: tRNA-cytidine(32) 2-sulfurtransferase (291 aa).

Residues 36–41 (SGGKDS) carry the PP-loop motif motif. Positions 111, 114, and 202 each coordinate [4Fe-4S] cluster. The interval 258 to 291 (RDPWLDAEDEEAEDCGEPPAGDGVVSLGGARGGR) is disordered. The segment covering 262 to 273 (LDAEDEEAEDCG) has biased composition (acidic residues).

This sequence belongs to the TtcA family. In terms of assembly, homodimer. Mg(2+) serves as cofactor. The cofactor is [4Fe-4S] cluster.

It is found in the cytoplasm. The catalysed reaction is cytidine(32) in tRNA + S-sulfanyl-L-cysteinyl-[cysteine desulfurase] + AH2 + ATP = 2-thiocytidine(32) in tRNA + L-cysteinyl-[cysteine desulfurase] + A + AMP + diphosphate + H(+). It functions in the pathway tRNA modification. Functionally, catalyzes the ATP-dependent 2-thiolation of cytidine in position 32 of tRNA, to form 2-thiocytidine (s(2)C32). The sulfur atoms are provided by the cysteine/cysteine desulfurase (IscS) system. This chain is tRNA-cytidine(32) 2-sulfurtransferase, found in Anaeromyxobacter dehalogenans (strain 2CP-1 / ATCC BAA-258).